A 498-amino-acid polypeptide reads, in one-letter code: Glutathione hydrolase 6 (498 aa).

Residues 1 to 49 lie on the Cytoplasmic side of the membrane; that stretch reads MDATTGAVLYQKLQLWEPGMESEEEEEEEEIAEPLVLSLRRLQNTPGNK. The chain crosses the membrane as a helical; Signal-anchor for type II membrane protein span at residues 50-70; it reads VGGLPGAWTRLLAGLLLLAVS. Residues 71–498 lie on the Extracellular side of the membrane; sequence SSLALRQLQG…PSGCCPFQGY (428 aa). Residues Asn-162, Asn-167, and Asn-376 are each glycosylated (N-linked (GlcNAc...) asparagine).

It belongs to the gamma-glutamyltransferase family. In terms of assembly, heterodimer composed of the light and heavy chains. The active site is located in the light chain. Post-translationally, cleaved by autocatalysis into a large and a small subunit and the autocatalytic cleavage is essential to the functional activation of the enzyme.

Its subcellular location is the membrane. It catalyses the reaction an N-terminal (5-L-glutamyl)-[peptide] + an alpha-amino acid = 5-L-glutamyl amino acid + an N-terminal L-alpha-aminoacyl-[peptide]. The enzyme catalyses glutathione + H2O = L-cysteinylglycine + L-glutamate. The catalysed reaction is an S-substituted glutathione + H2O = an S-substituted L-cysteinylglycine + L-glutamate. The protein operates within sulfur metabolism; glutathione metabolism. Hydrolyzes and transfers gamma-glutamyl moieties from glutathione and other gamma-glutamyl compounds to acceptors. The protein is Glutathione hydrolase 6 of Rattus norvegicus (Rat).